We begin with the raw amino-acid sequence, 463 residues long: Siroheme synthase (463 aa).

The interval 1-203 is precorrin-2 dehydrogenase /sirohydrochlorin ferrochelatase; that stretch reads MDYLPLFHKL…GQGAEAERLL (203 aa). NAD(+) is bound by residues 22–23 and 43–44; these read EI and PE. At Ser128 the chain carries Phosphoserine. The tract at residues 216–463 is uroporphyrinogen-III C-methyltransferase; sequence GEVYLVGAGP…LAWFEGAQNS (248 aa). Pro225 is a binding site for S-adenosyl-L-methionine. Asp248 acts as the Proton acceptor in catalysis. Residue Lys270 is the Proton donor of the active site. Residues 301 to 303, Ile306, 331 to 332, Met383, and Gly412 each bind S-adenosyl-L-methionine; these read GGD and TA.

In the N-terminal section; belongs to the precorrin-2 dehydrogenase / sirohydrochlorin ferrochelatase family. The protein in the C-terminal section; belongs to the precorrin methyltransferase family.

The enzyme catalyses uroporphyrinogen III + 2 S-adenosyl-L-methionine = precorrin-2 + 2 S-adenosyl-L-homocysteine + H(+). The catalysed reaction is precorrin-2 + NAD(+) = sirohydrochlorin + NADH + 2 H(+). It catalyses the reaction siroheme + 2 H(+) = sirohydrochlorin + Fe(2+). It functions in the pathway cofactor biosynthesis; adenosylcobalamin biosynthesis; precorrin-2 from uroporphyrinogen III: step 1/1. The protein operates within cofactor biosynthesis; adenosylcobalamin biosynthesis; sirohydrochlorin from precorrin-2: step 1/1. Its pathway is porphyrin-containing compound metabolism; siroheme biosynthesis; precorrin-2 from uroporphyrinogen III: step 1/1. It participates in porphyrin-containing compound metabolism; siroheme biosynthesis; siroheme from sirohydrochlorin: step 1/1. It functions in the pathway porphyrin-containing compound metabolism; siroheme biosynthesis; sirohydrochlorin from precorrin-2: step 1/1. Multifunctional enzyme that catalyzes the SAM-dependent methylations of uroporphyrinogen III at position C-2 and C-7 to form precorrin-2 via precorrin-1. Then it catalyzes the NAD-dependent ring dehydrogenation of precorrin-2 to yield sirohydrochlorin. Finally, it catalyzes the ferrochelation of sirohydrochlorin to yield siroheme. The sequence is that of Siroheme synthase from Pseudomonas entomophila (strain L48).